The primary structure comprises 115 residues: Migration and invasion enhancer 1 (115 aa).

Positions 1–10 (MSGDTGTTSV) are enriched in polar residues. Residues 1 to 22 (MSGDTGTTSVAPPPGETEPGHG) form a disordered region. Residue S2 is modified to N-acetylserine. C30 and C33 are oxidised to a cystine. Residue C112 is the site of S-geranylgeranyl cysteine attachment. A propeptide spans 113 to 115 (VIL) (removed in mature form).

Belongs to the SelWTH family. Interacts with GPX1. Isoprenylation facilitates association with the plasma membrane and enhances the migratory phenotype of cells by inducing increased filopodia formation.

It localises to the cytoplasm. The protein resides in the cytosol. It is found in the cell membrane. In terms of biological role, increases cell migration by inducing filopodia formation at the leading edge of migrating cells. Plays a role in regulation of apoptosis, possibly through control of CASP3. May be involved in a redox-related process. This chain is Migration and invasion enhancer 1 (MIEN1), found in Bos taurus (Bovine).